The following is a 243-amino-acid chain: Beta-glucanase (243 aa).

The N-terminal stretch at Met-1–Ala-27 is a signal peptide. A GH16 domain is found at Ala-29–Arg-243. Cysteines 61 and 90 form a disulfide. Glu-134 serves as the catalytic Nucleophile. Glu-138 acts as the Proton donor in catalysis.

It belongs to the glycosyl hydrolase 16 family.

It catalyses the reaction Hydrolysis of (1-&gt;4)-beta-D-glucosidic linkages in beta-D-glucans containing (1-&gt;3)- and (1-&gt;4)-bonds.. This chain is Beta-glucanase (bg1), found in Bacillus licheniformis.